The following is a 665-amino-acid chain: tRNA 5-methylaminomethyl-2-thiouridine biosynthesis bifunctional protein MnmC (665 aa).

The interval 1-235 (MTITRHAQID…KWEVLRGTFI (235 aa)) is tRNA (mnm(5)s(2)U34)-methyltransferase. The tract at residues 266–665 (IGAGLAGCAT…RGKGKQTVGH (400 aa)) is FAD-dependent cmnm(5)s(2)U34 oxidoreductase.

In the N-terminal section; belongs to the methyltransferase superfamily. tRNA (mnm(5)s(2)U34)-methyltransferase family. It in the C-terminal section; belongs to the DAO family. FAD serves as cofactor.

The protein localises to the cytoplasm. The enzyme catalyses 5-aminomethyl-2-thiouridine(34) in tRNA + S-adenosyl-L-methionine = 5-methylaminomethyl-2-thiouridine(34) in tRNA + S-adenosyl-L-homocysteine + H(+). Its function is as follows. Catalyzes the last two steps in the biosynthesis of 5-methylaminomethyl-2-thiouridine (mnm(5)s(2)U) at the wobble position (U34) in tRNA. Catalyzes the FAD-dependent demodification of cmnm(5)s(2)U34 to nm(5)s(2)U34, followed by the transfer of a methyl group from S-adenosyl-L-methionine to nm(5)s(2)U34, to form mnm(5)s(2)U34. In Pseudomonas syringae pv. syringae (strain B728a), this protein is tRNA 5-methylaminomethyl-2-thiouridine biosynthesis bifunctional protein MnmC.